Reading from the N-terminus, the 322-residue chain is XXXXXXXXXXXDGHCIPALGFGTYKPIEVPKSKAMEAANLAIGVGYRHIDTAYAYQIEEEIGQAIQSNIKAGIVKREDMFITTKLWCTCFQPELVRPSLEKXXXKLQLEHVDLFIMHYPVPMKAGDNDFPLDEQGKLLLDTVDFCATWEALEKXXDAGLVKSIGVSNFNMRQLERILNKPGLKYKPVCNQVECHVYNNQSKLLDYCKSKDIVLVAFGALGTQRYKEWVDQDSPVLLNDPVLCGGAKXXXRSPALIALRYLVQRGVVPLAQSFYESEMKENLQVFEFQLSPEDMKILDGLNKNFRYLPAQFFADHPEYPFSEE.

NAD(+) is bound by residues 20–24 (GFGTY) and Asp-50. Tyr-55 acts as the Proton donor in catalysis. His-117 serves as a coordination point for substrate. NAD(+) is bound by residues 166–167 (SN), Gln-190, 216–224 (FGALGTQRY), and 270–280 (QSFYESEMKEN).

The protein belongs to the aldo/keto reductase family. Monomer. Post-translationally, the N-terminus is blocked.

The enzyme catalyses morphine + NAD(+) = morphinone + NADH + H(+). The catalysed reaction is morphine + NADP(+) = morphinone + NADPH + H(+). Its activity is regulated as follows. Strongly inhibited by sulfhydryl reagents and ketamine, but not by pyrazole, barbital and indomethacine. Catalyzes the dehydrogenation of morphine to morphinone. The enzyme also exhibits significant activity for a variety of cyclic and alicyclic alcohols. In addition to xenobiotics, the enzyme catalyzes the dehydrogenation of 17-beta-hydroxysteroids with much higher affinities than morphine. Uses both NAD and NADP, but the activity is much greater with NAD than with NADP. The protein is Aldo-keto reductase family 1 member C13 (AKR1C13) of Mesocricetus auratus (Golden hamster).